The primary structure comprises 197 residues: uncharacterized protein (197 aa).

4 helical membrane passes run 9 to 29 (IYIL…RFIL), 67 to 87 (LASL…ILML), 104 to 124 (IIAV…ISVI), and 160 to 180 (GLDL…MLVI).

Belongs to the YggT family.

Its subcellular location is the cell membrane. This is an uncharacterized protein from Pseudomonas aeruginosa (strain ATCC 15692 / DSM 22644 / CIP 104116 / JCM 14847 / LMG 12228 / 1C / PRS 101 / PAO1).